A 315-amino-acid chain; its full sequence is uncharacterized protein (315 aa).

The segment covering 1–23 (MSNTDALNTANTQITENVDTSSM) has biased composition (polar residues). The disordered stretch occupies residues 1–31 (MSNTDALNTANTQITENVDTSSMKVEKTHDS).

This is an uncharacterized protein from Acanthamoeba polyphaga mimivirus (APMV).